The following is a 416-amino-acid chain: Phosphoglycerate kinase (416 aa).

Positions 23, 24, 25, 26, 38, 39, 62, 63, 65, 66, 121, 122, 168, and 169 each coordinate (2R)-3-phosphoglycerate. An ADP-binding site is contributed by Gly-212. Gly-212 is a CDP binding site. AMP contacts are provided by Ala-213 and Lys-214. Ala-213 contacts ATP. Mg(2+) is bound at residue Ala-213. Mg(2+)-binding residues include Ala-216 and Asp-217. Position 217 (Asp-217) interacts with CDP. AMP is bound at residue Lys-218. ATP is bound at residue Lys-218. Gly-236 provides a ligand contact to ADP. Gly-236 is a binding site for CDP. 2 residues coordinate AMP: Gly-237 and Gly-311. ATP contacts are provided by Gly-237 and Gly-311. Residues Gly-336 and Phe-341 each coordinate CDP. Phe-341 contributes to the ADP binding site. Residue Glu-342 coordinates AMP. The ATP site is built by Glu-342, Asp-373, and Thr-374. Asp-373 serves as a coordination point for Mg(2+).

Belongs to the phosphoglycerate kinase family. Monomer. Mg(2+) serves as cofactor.

The protein resides in the cytoplasm. Its subcellular location is the mitochondrion. The catalysed reaction is (2R)-3-phosphoglycerate + ATP = (2R)-3-phospho-glyceroyl phosphate + ADP. The protein operates within carbohydrate degradation; glycolysis; pyruvate from D-glyceraldehyde 3-phosphate: step 2/5. Its function is as follows. Catalyzes one of the two ATP producing reactions in the glycolytic pathway via the reversible conversion of 1,3-diphosphoglycerate to 3-phosphoglycerate. Both L- and D- forms of purine and pyrimidine nucleotides can be used as substrates, but the activity is much lower on pyrimidines. Negatively regulates the biosynthesis of acetyl-CoA from pyruvate in the mitochondrion. The sequence is that of Phosphoglycerate kinase (PGK1) from Candida glabrata (strain ATCC 2001 / BCRC 20586 / JCM 3761 / NBRC 0622 / NRRL Y-65 / CBS 138) (Yeast).